The following is a 206-amino-acid chain: MLSNLMSWQITLQIALAAAVIGYLLGSIPFGLILTRAAGLGDVRSIGSGNIGATNVLRTGNRKLAAATLLLDALKASAAAWIVGYFLGEEAAIIAGFFAFIGHLFPVWIGFKGGKGVATYIGTLLGVAPIMVVLFAAVWLAVAVTTRYSSLSALVAMLVIPVALLILGNEKVAAVMAIMTVISYWKHRANISRLMGGTESKIGAKG.

The next 5 membrane-spanning stretches (helical) occupy residues 14 to 34, 67 to 87, 91 to 111, 124 to 144, and 148 to 168; these read IALA…GLIL, ATLL…GYFL, AAII…WIGF, LLGV…AVAV, and YSSL…LILG.

Belongs to the PlsY family. Probably interacts with PlsX.

The protein resides in the cell inner membrane. It catalyses the reaction an acyl phosphate + sn-glycerol 3-phosphate = a 1-acyl-sn-glycero-3-phosphate + phosphate. It functions in the pathway lipid metabolism; phospholipid metabolism. Catalyzes the transfer of an acyl group from acyl-phosphate (acyl-PO(4)) to glycerol-3-phosphate (G3P) to form lysophosphatidic acid (LPA). This enzyme utilizes acyl-phosphate as fatty acyl donor, but not acyl-CoA or acyl-ACP. The chain is Glycerol-3-phosphate acyltransferase from Rhizobium etli (strain ATCC 51251 / DSM 11541 / JCM 21823 / NBRC 15573 / CFN 42).